Consider the following 678-residue polypeptide: Oviduct-specific glycoprotein (678 aa).

The N-terminal stretch at 1–21 (MWKLLLWVGLVLVLKHHDGAA) is a signal peptide. One can recognise a GH18 domain in the interval 22–385 (HKLVCYFTNW…YVLNDILVRA (364 aa)). An intrachain disulfide couples Cys-26 to Cys-51. Residues 71-72 (LQ), 98-101 (GGWN), Tyr-142, 211-214 (LSYD), and Trp-355 contribute to the chitin site. Asn-402 and Asn-441 each carry an N-linked (GlcNAc...) asparagine glycan. Residues 524–544 (LTPVGHQSVTPVSHQSVSPGG) are disordered. Polar residues predominate over residues 528-544 (GHQSVTPVSHQSVSPGG). 3 N-linked (GlcNAc...) asparagine glycosylation sites follow: Asn-580, Asn-596, and Asn-648. Residues 581-606 (ISVTPEGQTMPLRGENLTSEVGTHPR) are disordered. Polar residues predominate over residues 651 to 662 (SVNSVTPQTSPL). A disordered region spans residues 651–678 (SVNSVTPQTSPLSLKKEIPENSAVDEEA).

This sequence belongs to the glycosyl hydrolase 18 family. Oviduct.

It is found in the cytoplasmic vesicle. It localises to the secretory vesicle. Binds to oocyte zona pellucida in vivo. May play a role in the fertilization process and/or early embryonic development. This is Oviduct-specific glycoprotein (OVGP1) from Homo sapiens (Human).